Here is a 251-residue protein sequence, read N- to C-terminus: Ubiquinone/menaquinone biosynthesis C-methyltransferase UbiE (251 aa).

Residues Thr74, Asp95, 123–124 (NA), and Ser140 contribute to the S-adenosyl-L-methionine site.

It belongs to the class I-like SAM-binding methyltransferase superfamily. MenG/UbiE family.

It carries out the reaction a 2-demethylmenaquinol + S-adenosyl-L-methionine = a menaquinol + S-adenosyl-L-homocysteine + H(+). The enzyme catalyses a 2-methoxy-6-(all-trans-polyprenyl)benzene-1,4-diol + S-adenosyl-L-methionine = a 5-methoxy-2-methyl-3-(all-trans-polyprenyl)benzene-1,4-diol + S-adenosyl-L-homocysteine + H(+). It participates in quinol/quinone metabolism; menaquinone biosynthesis; menaquinol from 1,4-dihydroxy-2-naphthoate: step 2/2. The protein operates within cofactor biosynthesis; ubiquinone biosynthesis. Functionally, methyltransferase required for the conversion of demethylmenaquinol (DMKH2) to menaquinol (MKH2) and the conversion of 2-polyprenyl-6-methoxy-1,4-benzoquinol (DDMQH2) to 2-polyprenyl-3-methyl-6-methoxy-1,4-benzoquinol (DMQH2). This chain is Ubiquinone/menaquinone biosynthesis C-methyltransferase UbiE, found in Salmonella arizonae (strain ATCC BAA-731 / CDC346-86 / RSK2980).